The primary structure comprises 29 residues: TRCKGKGAPCRKTMYDCCSGSCGRRGKCG.

A propeptide spanning residues 1 to 2 (TR) is cleaved from the precursor. 3 disulfide bridges follow: cysteine 3–cysteine 18, cysteine 10–cysteine 22, and cysteine 17–cysteine 28. Residue cysteine 28 is modified to Cysteine amide.

It belongs to the conotoxin O1 superfamily. Not hydroxylated; hydroxylation, on a synthetic hydroxylated MVIIC, has a significant impact on the oxidative folding but not on the biological activity. In terms of tissue distribution, expressed by the venom duct.

Its subcellular location is the secreted. Omega-conotoxins act at presynaptic membranes, they bind and block voltage-gated calcium channels (Cav). This toxin preferentially blocks P/Q-type calcium channels (Cav2.1/CACNA1A) (IC(50)=0.60 nM). Also shows an inhibition on Cav2.2/CACNA1A channels (IC(50)=7.0 nM). The chain is Omega-conotoxin MVIIC from Conus magus (Magical cone).